A 282-amino-acid polypeptide reads, in one-letter code: Bis(5'-nucleosyl)-tetraphosphatase, symmetrical (282 aa).

This sequence belongs to the Ap4A hydrolase family.

It carries out the reaction P(1),P(4)-bis(5'-adenosyl) tetraphosphate + H2O = 2 ADP + 2 H(+). Functionally, hydrolyzes diadenosine 5',5'''-P1,P4-tetraphosphate to yield ADP. This chain is Bis(5'-nucleosyl)-tetraphosphatase, symmetrical, found in Sodalis glossinidius (strain morsitans).